The following is a 319-amino-acid chain: FAD-dependent oxidoreductase FVFD30 (319 aa).

FAD is bound by residues R6, D18, and K25. NAD(+)-binding residues include K129 and G188. Positions 129 and 188 each coordinate NADP(+). FAD contacts are provided by D228 and Y265. A 6-hydroxy-FAD-binding site is contributed by D228. NAD(+) is bound at residue Y265. Y265 contacts NADP(+). A helical transmembrane segment spans residues 281-301; the sequence is GVGYFGVWWGIVIGGWLASLL.

Belongs to the FAD-dependent oxidoreductase family.

The protein resides in the membrane. Its function is as follows. Probable FAD-dependent oxidoreductase that plays a role in the regulation of fruiting body development. This Flammulina velutipes (Agaricus velutipes) protein is FAD-dependent oxidoreductase FVFD30.